The primary structure comprises 354 residues: Deoxyribonuclease-2-beta (354 aa).

The first 22 residues, 1–22 (MTAKPLRTVLSLLFFALSGVLG), serve as a signal peptide directing secretion. N-linked (GlcNAc...) asparagine glycans are attached at residues Asn70, Asn77, Asn95, Asn98, Asn114, Asn129, Asn208, Asn271, and Asn319.

Belongs to the DNase II family. In terms of tissue distribution, highly expressed in the eye lens. Detected in liver, but not in the other tissues tested.

The protein resides in the lysosome. It catalyses the reaction Endonucleolytic cleavage to nucleoside 3'-phosphates and 3'-phosphooligonucleotide end-products.. Its function is as follows. Hydrolyzes DNA under acidic conditions. Does not require divalent cations for activity. Participates in the degradation of nuclear DNA during lens cell differentiation. The protein is Deoxyribonuclease-2-beta (Dnase2b) of Mus musculus (Mouse).